We begin with the raw amino-acid sequence, 842 residues long: Molybdenum cofactor sulfurase (842 aa).

Lys236 is subject to N6-(pyridoxal phosphate)lysine. Cys402 is a catalytic residue. The segment at 637-680 (PGSQHGDAQRSSKARLQKHQITTDQESDVQEVHPGSGTTTDSTW) is disordered. Residues 663-831 (SDVQEVHPGS…AARGDVAYPT (169 aa)) form the MOSC domain.

This sequence belongs to the class-V pyridoxal-phosphate-dependent aminotransferase family. MOCOS subfamily. The cofactor is pyridoxal 5'-phosphate.

It carries out the reaction Mo-molybdopterin + L-cysteine + AH2 = thio-Mo-molybdopterin + L-alanine + A + H2O. It functions in the pathway cofactor biosynthesis; molybdopterin biosynthesis. In terms of biological role, sulfurates the molybdenum cofactor. Sulfation of molybdenum is essential for xanthine dehydrogenase (XDH) and aldehyde oxidase (ADO) enzymes in which molybdenum cofactor is liganded by 1 oxygen and 1 sulfur atom in active form. This chain is Molybdenum cofactor sulfurase, found in Pyricularia oryzae (strain 70-15 / ATCC MYA-4617 / FGSC 8958) (Rice blast fungus).